The following is a 217-amino-acid chain: 3-demethoxyubiquinol 3-hydroxylase (217 aa).

Residues E66, E96, H99, E148, E180, and H183 each contribute to the Fe cation site.

This sequence belongs to the COQ7 family. Requires Fe cation as cofactor.

Its subcellular location is the cell membrane. The enzyme catalyses a 5-methoxy-2-methyl-3-(all-trans-polyprenyl)benzene-1,4-diol + AH2 + O2 = a 3-demethylubiquinol + A + H2O. Its pathway is cofactor biosynthesis; ubiquinone biosynthesis. Its function is as follows. Catalyzes the hydroxylation of 2-nonaprenyl-3-methyl-6-methoxy-1,4-benzoquinol during ubiquinone biosynthesis. The chain is 3-demethoxyubiquinol 3-hydroxylase from Xylella fastidiosa (strain 9a5c).